A 556-amino-acid polypeptide reads, in one-letter code: Formate--tetrahydrofolate ligase (556 aa).

Thr65–Ser72 serves as a coordination point for ATP.

This sequence belongs to the formate--tetrahydrofolate ligase family.

It catalyses the reaction (6S)-5,6,7,8-tetrahydrofolate + formate + ATP = (6R)-10-formyltetrahydrofolate + ADP + phosphate. It functions in the pathway one-carbon metabolism; tetrahydrofolate interconversion. The chain is Formate--tetrahydrofolate ligase from Streptococcus mutans serotype c (strain ATCC 700610 / UA159).